Reading from the N-terminus, the 448-residue chain is Argininosuccinate synthase (448 aa).

Residues 17–25 and Ala43 each bind ATP; that span reads AFSGGLDTS. Position 99 (Tyr99) interacts with L-citrulline. The ATP site is built by Gly129 and Thr131. L-aspartate-binding residues include Thr131, Asn135, and Asp136. An L-citrulline-binding site is contributed by Asn135. Position 136 (Asp136) interacts with ATP. Arg139 and Ser192 together coordinate L-citrulline. Asp194 contributes to the ATP binding site. Positions 201, 203, and 280 each coordinate L-citrulline.

It belongs to the argininosuccinate synthase family. Type 2 subfamily. In terms of assembly, homotetramer.

It is found in the cytoplasm. It catalyses the reaction L-citrulline + L-aspartate + ATP = 2-(N(omega)-L-arginino)succinate + AMP + diphosphate + H(+). It functions in the pathway amino-acid biosynthesis; L-arginine biosynthesis; L-arginine from L-ornithine and carbamoyl phosphate: step 2/3. The sequence is that of Argininosuccinate synthase from Pectobacterium carotovorum subsp. carotovorum (strain PC1).